The chain runs to 219 residues: uncharacterized protein (219 aa).

Residues 28 to 50 traverse the membrane as a helical segment; that stretch reads IVSSLIAGGYALFVSAFTSYVYT. Positions 155 to 218 form a coiled coil; sequence EILRESLSEI…EEIEKELEFF (64 aa).

It localises to the membrane. This is an uncharacterized protein from Aquifex aeolicus (strain VF5).